A 398-amino-acid chain; its full sequence is tRNA-specific 2-thiouridylase MnmA (398 aa).

ATP contacts are provided by residues 20-27 (AMSGGVDS) and Leu46. The Nucleophile role is filled by Cys114. Cys114 and Cys210 form a disulfide bridge. Gly138 provides a ligand contact to ATP. An interaction with tRNA region spans residues 160–162 (RDQ). The active-site Cysteine persulfide intermediate is Cys210.

The protein belongs to the MnmA/TRMU family.

Its subcellular location is the cytoplasm. The catalysed reaction is S-sulfanyl-L-cysteinyl-[protein] + uridine(34) in tRNA + AH2 + ATP = 2-thiouridine(34) in tRNA + L-cysteinyl-[protein] + A + AMP + diphosphate + H(+). Functionally, catalyzes the 2-thiolation of uridine at the wobble position (U34) of tRNA, leading to the formation of s(2)U34. The sequence is that of tRNA-specific 2-thiouridylase MnmA from Brucella suis (strain ATCC 23445 / NCTC 10510).